The sequence spans 1300 residues: Serine protease EspP (1300 aa).

A signal peptide spans 1–55; sequence MNKIYSLKYSHITGGLIAVSELSGRVSSRATGKKKHKRILALCFLGLLQSSYSFA. The region spanning 57–311 is the Peptidase S6 domain; it reads QMDISNFYIR…NQTTIDNLKN (255 aa). Catalysis depends on charge relay system residues His-127, Asp-156, and Ser-263. In terms of domain architecture, Autotransporter spans 1034-1300; it reads DINGEAGAWA…AVNANFRYSF (267 aa).

Cleaved to release the mature protein from the outer membrane.

Its subcellular location is the periplasm. The protein resides in the secreted. It localises to the cell surface. It is found in the cell outer membrane. In terms of biological role, serine protease with cytotoxic effect. Disrupts actin cytoskeleton resulting cell detachment in vitro. In Escherichia coli, this protein is Serine protease EspP (espP).